Consider the following 716-residue polypeptide: 1,4-alpha-glucan branching enzyme GlgB (716 aa).

D399 serves as the catalytic Nucleophile. E452 serves as the catalytic Proton donor.

This sequence belongs to the glycosyl hydrolase 13 family. GlgB subfamily. Monomer.

The enzyme catalyses Transfers a segment of a (1-&gt;4)-alpha-D-glucan chain to a primary hydroxy group in a similar glucan chain.. It participates in glycan biosynthesis; glycogen biosynthesis. Catalyzes the formation of the alpha-1,6-glucosidic linkages in glycogen by scission of a 1,4-alpha-linked oligosaccharide from growing alpha-1,4-glucan chains and the subsequent attachment of the oligosaccharide to the alpha-1,6 position. This Rhodopseudomonas palustris (strain BisB5) protein is 1,4-alpha-glucan branching enzyme GlgB.